A 232-amino-acid chain; its full sequence is Large ribosomal subunit protein uL1 (232 aa).

This sequence belongs to the universal ribosomal protein uL1 family. In terms of assembly, part of the 50S ribosomal subunit.

Binds directly to 23S rRNA. The L1 stalk is quite mobile in the ribosome, and is involved in E site tRNA release. Its function is as follows. Protein L1 is also a translational repressor protein, it controls the translation of the L11 operon by binding to its mRNA. In Hahella chejuensis (strain KCTC 2396), this protein is Large ribosomal subunit protein uL1.